A 536-amino-acid polypeptide reads, in one-letter code: Phosphoenolpyruvate carboxykinase (ATP) (536 aa).

Positions 61, 195, and 201 each coordinate substrate. ATP is bound by residues Lys201, His220, and 236–244; that span reads GLSGTGKTT. Residues Lys201 and His220 each contribute to the Mn(2+) site. Asp257 provides a ligand contact to Mn(2+). The ATP site is built by Glu285, Arg322, and Thr447. Arg322 lines the substrate pocket.

Belongs to the phosphoenolpyruvate carboxykinase (ATP) family. Mn(2+) is required as a cofactor.

It is found in the cytoplasm. It carries out the reaction oxaloacetate + ATP = phosphoenolpyruvate + ADP + CO2. It functions in the pathway carbohydrate biosynthesis; gluconeogenesis. Involved in the gluconeogenesis. Catalyzes the conversion of oxaloacetate (OAA) to phosphoenolpyruvate (PEP) through direct phosphoryl transfer between the nucleoside triphosphate and OAA. This Chelativorans sp. (strain BNC1) protein is Phosphoenolpyruvate carboxykinase (ATP).